The following is a 456-amino-acid chain: MRSSWIKPRLGKDNVTQMNFARNGYITEEMDFVAKKENLPSSLIMEEVARGRLIIPANINHLNLEPMSIGIASRCKVNANIGASPNASDINEEVEKLKLAVKYGADTVMDLSTGGVNLDEVRQAIIQESPVPIGTVPVYQALESVHGSIDRLTEDDFLHIIEKHCQQGVDYQTIHAGLLIEHLPKVKGRITGIVSRGGGILAQWMLHHFKQNPLYTRFDDICEIFKKYDCTFSLGDSLRPGCLHDASDDAQLAELKTLGELTRRAWEHNVQVMVEGPGHVPMDQIEFNVRKQMEECSEAPFYVLGPLVTDISPGYDHISSAIGAAMAGWYGTSMLCYVTPKEHLGLPNAEDVREGLIAYKIAAHAADIARHRAGARDRDDELSHARYNFDWNKQFELSLDPERAKQYHDETLPEEIFKKAEFCSMCGPKHCPMNSKISDESLDQLKDKLEECNTSV.

Substrate is bound by residues Asn-80, Met-109, Tyr-139, His-175, 195 to 197, 236 to 239, and Glu-275; these read SRG and DSLR. His-279 is a Zn(2+) binding site. Tyr-302 serves as a coordination point for substrate. His-343 is a Zn(2+) binding site. 3 residues coordinate [4Fe-4S] cluster: Cys-423, Cys-426, and Cys-431.

The protein belongs to the ThiC family. [4Fe-4S] cluster is required as a cofactor.

It carries out the reaction 5-amino-1-(5-phospho-beta-D-ribosyl)imidazole + S-adenosyl-L-methionine = 4-amino-2-methyl-5-(phosphooxymethyl)pyrimidine + CO + 5'-deoxyadenosine + formate + L-methionine + 3 H(+). The protein operates within cofactor biosynthesis; thiamine diphosphate biosynthesis. In terms of biological role, catalyzes the synthesis of the hydroxymethylpyrimidine phosphate (HMP-P) moiety of thiamine from aminoimidazole ribotide (AIR) in a radical S-adenosyl-L-methionine (SAM)-dependent reaction. This chain is Phosphomethylpyrimidine synthase, found in Prochlorococcus marinus (strain AS9601).